The following is a 162-amino-acid chain: Selenoprotein F (162 aa).

The first 28 residues, 1-28 (MAAGQGGWLRPALGLRLLLATAFQAVSA), serve as a signal peptide directing secretion. Residue Sec-93 is a non-standard amino acid, selenocysteine.

It belongs to the selenoprotein M/F family. Forms a tight complex with UGGT1/UGCGL1. Interacts with UGGT2/UGCGL2. Interacts with RDH11.

It is found in the endoplasmic reticulum lumen. May be involved in redox reactions associated with the formation of disulfide bonds. May contribute to the quality control of protein folding in the endoplasmic reticulum. May regulate protein folding by enhancing the catalytic activity of UGGT1/UGCGL1 and UGGT2/UGCGL2. This is Selenoprotein F from Mus musculus (Mouse).